The chain runs to 74 residues: DNA gyrase inhibitor YacG (74 aa).

C7, C10, C26, and C30 together coordinate Zn(2+).

The protein belongs to the DNA gyrase inhibitor YacG family. As to quaternary structure, interacts with GyrB. The cofactor is Zn(2+).

In terms of biological role, inhibits all the catalytic activities of DNA gyrase by preventing its interaction with DNA. Acts by binding directly to the C-terminal domain of GyrB, which probably disrupts DNA binding by the gyrase. In Shewanella denitrificans (strain OS217 / ATCC BAA-1090 / DSM 15013), this protein is DNA gyrase inhibitor YacG.